The sequence spans 149 residues: MKVIFLQDVKGKGKKGEVKNVADGYAHNFLIKKGLAVEATSANISALEGQKKKEKKEAAEELKSAKELKKQLEEITVELSAKSGEGGRLFGSVTSKQIADALQKGHQLKVDKRKIELNDAIRSLGYTNVPVKLHPEVQATLKVHVKEQS.

It belongs to the bacterial ribosomal protein bL9 family.

Binds to the 23S rRNA. The sequence is that of Large ribosomal subunit protein bL9 from Bacillus licheniformis (strain ATCC 14580 / DSM 13 / JCM 2505 / CCUG 7422 / NBRC 12200 / NCIMB 9375 / NCTC 10341 / NRRL NRS-1264 / Gibson 46).